A 608-amino-acid polypeptide reads, in one-letter code: Probable Ufm1-specific protease 2 (608 aa).

Catalysis depends on residues Cys-441, Asp-565, and His-567.

This sequence belongs to the peptidase C78 family.

Functionally, thiol protease which recognizes and hydrolyzes the peptide bond at the C-terminal Gly of UFM1, a ubiquitin-like modifier protein bound to a number of target proteins. Does not hydrolyze SUMO1 or ISG15 ubiquitin-like proteins. The protein is Probable Ufm1-specific protease 2 of Drosophila pseudoobscura pseudoobscura (Fruit fly).